The sequence spans 213 residues: Orotate phosphoribosyltransferase (213 aa).

Lys-25 contacts 5-phospho-alpha-D-ribose 1-diphosphate. 33–34 provides a ligand contact to orotate; that stretch reads FF. Residues 71–72, Arg-98, Lys-99, Lys-102, His-104, and 124–132 contribute to the 5-phospho-alpha-D-ribose 1-diphosphate site; these read YK and DDVITSGTA. Orotate is bound by residues Thr-128 and Arg-156.

It belongs to the purine/pyrimidine phosphoribosyltransferase family. PyrE subfamily. Homodimer. Mg(2+) is required as a cofactor.

The catalysed reaction is orotidine 5'-phosphate + diphosphate = orotate + 5-phospho-alpha-D-ribose 1-diphosphate. The protein operates within pyrimidine metabolism; UMP biosynthesis via de novo pathway; UMP from orotate: step 1/2. Functionally, catalyzes the transfer of a ribosyl phosphate group from 5-phosphoribose 1-diphosphate to orotate, leading to the formation of orotidine monophosphate (OMP). The sequence is that of Orotate phosphoribosyltransferase from Buchnera aphidicola subsp. Acyrthosiphon pisum (strain 5A).